A 122-amino-acid polypeptide reads, in one-letter code: Large ribosomal subunit protein uL14 (122 aa).

The protein belongs to the universal ribosomal protein uL14 family. Part of the 50S ribosomal subunit. Forms a cluster with proteins L3 and L19. In the 70S ribosome, L14 and L19 interact and together make contacts with the 16S rRNA in bridges B5 and B8.

Functionally, binds to 23S rRNA. Forms part of two intersubunit bridges in the 70S ribosome. The sequence is that of Large ribosomal subunit protein uL14 from Wolinella succinogenes (strain ATCC 29543 / DSM 1740 / CCUG 13145 / JCM 31913 / LMG 7466 / NCTC 11488 / FDC 602W) (Vibrio succinogenes).